Consider the following 234-residue polypeptide: Urease subunit alpha (234 aa).

The interval 1–102 (MKLTPKELDK…LVTIHTPVEA (102 aa)) is urease gamma. Positions 103–234 (GSDKLAPGEV…GTINCGCDNK (132 aa)) are urease beta.

The protein in the N-terminal section; belongs to the urease gamma subunit family. This sequence in the C-terminal section; belongs to the urease beta subunit family. As to quaternary structure, heterohexamer of 3 UreA (alpha) and 3 UreB (beta) subunits.

It is found in the cytoplasm. It carries out the reaction urea + 2 H2O + H(+) = hydrogencarbonate + 2 NH4(+). It participates in nitrogen metabolism; urea degradation; CO(2) and NH(3) from urea (urease route): step 1/1. The protein is Urease subunit alpha of Helicobacter heilmannii.